Reading from the N-terminus, the 162-residue chain is Nucleotide-binding protein ACIAD3137 (162 aa).

This sequence belongs to the YajQ family.

Functionally, nucleotide-binding protein. This Acinetobacter baylyi (strain ATCC 33305 / BD413 / ADP1) protein is Nucleotide-binding protein ACIAD3137.